Reading from the N-terminus, the 273-residue chain is Bis(5'-nucleosyl)-tetraphosphatase, symmetrical (273 aa).

It belongs to the Ap4A hydrolase family.

It catalyses the reaction P(1),P(4)-bis(5'-adenosyl) tetraphosphate + H2O = 2 ADP + 2 H(+). Its function is as follows. Hydrolyzes diadenosine 5',5'''-P1,P4-tetraphosphate to yield ADP. The polypeptide is Bis(5'-nucleosyl)-tetraphosphatase, symmetrical (Aromatoleum aromaticum (strain DSM 19018 / LMG 30748 / EbN1) (Azoarcus sp. (strain EbN1))).